Here is a 471-residue protein sequence, read N- to C-terminus: uncharacterized protein (471 aa).

Helical transmembrane passes span 48–68 (FISA…FTIV), 85–105 (LSGV…YPML), 123–140 (YTMS…YALA), 145–165 (SVAL…MFLY), 186–206 (VVNS…GGLM), 223–243 (SGNW…FACF), 277–297 (FVGC…YFLL), 320–340 (GNFL…FSYL), 349–369 (IILL…TIHY), 379–399 (FIIY…SVSL), 414–434 (VAVQ…GGAF), and 440–460 (VVFF…LLII).

The protein belongs to the major facilitator superfamily.

It localises to the golgi apparatus. It is found in the membrane. This is an uncharacterized protein from Schizosaccharomyces pombe (strain 972 / ATCC 24843) (Fission yeast).